Here is a 240-residue protein sequence, read N- to C-terminus: Uridylate kinase (240 aa).

Residue 12–15 participates in ATP binding; sequence KLSG. The involved in allosteric activation by GTP stretch occupies residues 20–25; it reads GEQGNG. A UMP-binding site is contributed by glycine 54. Residues glycine 55 and arginine 59 each contribute to the ATP site. UMP-binding positions include aspartate 74 and 135–142; that span reads TGNPYFST. 3 residues coordinate ATP: asparagine 163, tyrosine 169, and aspartate 172.

This sequence belongs to the UMP kinase family. Homohexamer.

The protein resides in the cytoplasm. The enzyme catalyses UMP + ATP = UDP + ADP. The protein operates within pyrimidine metabolism; CTP biosynthesis via de novo pathway; UDP from UMP (UMPK route): step 1/1. Its activity is regulated as follows. Allosterically activated by GTP. Inhibited by UTP. Its function is as follows. Catalyzes the reversible phosphorylation of UMP to UDP. This is Uridylate kinase from Bacillus velezensis (strain DSM 23117 / BGSC 10A6 / LMG 26770 / FZB42) (Bacillus amyloliquefaciens subsp. plantarum).